The chain runs to 889 residues: Envelope glycoprotein gp160 (889 aa).

The N-terminal stretch at 1 to 22 (MGCLGNQLLIALLLLSASGIYC) is a signal peptide. Residues 23-704 (VQYVTVFYGI…TSWIKYIQYG (682 aa)) are Extracellular-facing. Asn-37 is a glycosylation site (N-linked (GlcNAc...) asparagine; by host). Cys-44 and Cys-57 are joined by a disulfide. N-linked (GlcNAc...) asparagine; by host glycosylation is found at Asn-70 and Asn-114. Disulfide bonds link Cys-101–Cys-226, Cys-108–Cys-217, Cys-113–Cys-175, Cys-239–Cys-269, and Cys-249–Cys-261. The tract at residues 113–174 (CNKSETDRWG…TGLEQEPMVS (62 aa)) is V1. Residues 120–145 (RWGLTGTPAPTTTQTTTTQASTTPTS) are disordered. Residues 126 to 145 (TPAPTTTQTTTTQASTTPTS) show a composition bias toward low complexity. Asn-153, Asn-163, Asn-178, Asn-191, Asn-206, Asn-218, Asn-250, Asn-253, Asn-260, Asn-284, Asn-290, Asn-301, Asn-312, Asn-322, Asn-377, Asn-422, Asn-470, Asn-486, and Asn-489 each carry an N-linked (GlcNAc...) asparagine; by host glycan. The V2 stretch occupies residues 175-217 (CKFNMTGLKRDKKREYNETWYSRDLVCEQNSNETDSKCYMNHC). The interval 317-349 (CRRPGNKTVLPVTIMSGLVFHSQPINERPKQAW) is V3. A disulfide bridge links Cys-317 with Cys-350. Cystine bridges form between Cys-401–Cys-469 and Cys-408–Cys-442. The V4 stretch occupies residues 408–442 (CKMNWFLNWVENIQNGSRWTSQNQKERQRRNYVPC). A V5 region spans residues 485–492 (GNETNITM). Positions 536–556 (GVFVLGFLGFLATAGSAMSAA) are fusion peptide. Residues 599–615 (LQTRVTAIEKYLKDQAQ) form an immunosuppression region. N-linked (GlcNAc...) asparagine; by host glycans are attached at residues Asn-635, Asn-644, and Asn-660. Residues 648–675 (QEWEKQVNFLEANITQSLEEAQIQQEKN) are a coiled coil. The segment at 681–702 (KLNSWDIFGNWFDLTSWIKYIQ) is MPER; binding to GalCer. A helical transmembrane segment spans residues 705 to 725 (VLIVLGVIGLRIVIYVVQMLA). The Cytoplasmic portion of the chain corresponds to 726–889 (RLRQGYRPVF…IRQGLELTLL (164 aa)). The YXXV motif; contains endocytosis signal signature appears at 731–734 (YRPV). The S-palmitoyl cysteine; by host moiety is linked to residue Cys-797. Residues 888 to 889 (LL) carry the Di-leucine internalization motif motif.

In terms of assembly, the mature envelope protein (Env) consists of a homotrimer of non-covalently associated gp120-gp41 heterodimers. The resulting complex protrudes from the virus surface as a spike. Interacts with host CD4 and CCR5. Gp120 also interacts with the C-type lectins CD209/DC-SIGN and CLEC4M/DC-SIGNR (collectively referred to as DC-SIGN(R)). The mature envelope protein (Env) consists of a homotrimer of non-covalently associated gp120-gp41 heterodimers. The resulting complex protrudes from the virus surface as a spike. Post-translationally, specific enzymatic cleavages in vivo yield mature proteins. Envelope glycoproteins are synthesized as an inactive precursor that is heavily N-glycosylated and processed likely by host cell furin in the Golgi to yield the mature SU and TM proteins. The cleavage site between SU and TM requires the minimal sequence [KR]-X-[KR]-R. In terms of processing, palmitoylation of the transmembrane protein and of Env polyprotein (prior to its proteolytic cleavage) is essential for their association with host cell membrane lipid rafts. Palmitoylation is therefore required for envelope trafficking to classical lipid rafts, but not for viral replication.

It localises to the virion membrane. The protein localises to the host cell membrane. The protein resides in the host endosome membrane. The surface protein gp120 (SU) attaches the virus to the host lymphoid cell by binding to the primary receptor CD4. This interaction induces a structural rearrangement creating a high affinity binding site for a chemokine coreceptor like CCR5. This peculiar 2 stage receptor-interaction strategy allows gp120 to maintain the highly conserved coreceptor-binding site in a cryptic conformation, protected from neutralizing antibodies. These changes are transmitted to the transmembrane protein gp41 and are thought to activate its fusogenic potential by unmasking its fusion peptide. In terms of biological role, surface protein gp120 (SU) may target the virus to gut-associated lymphoid tissue (GALT) by binding host ITGA4/ITGB7 (alpha-4/beta-7 integrins), a complex that mediates T-cell migration to the GALT. Interaction between gp120 and ITGA4/ITGB7 would allow the virus to enter GALT early in the infection, infecting and killing most of GALT's resting CD4+ T-cells. This T-cell depletion is believed to be the major insult to the host immune system leading to AIDS. Functionally, the surface protein gp120 is a ligand for CD209/DC-SIGN and CLEC4M/DC-SIGNR, which are respectively found on dendritic cells (DCs), and on endothelial cells of liver sinusoids and lymph node sinuses. These interactions allow capture of viral particles at mucosal surfaces by these cells and subsequent transmission to permissive cells. DCs are professional antigen presenting cells, critical for host immunity by inducing specific immune responses against a broad variety of pathogens. They act as sentinels in various tissues where they take up antigen, process it, and present it to T-cells following migration to lymphoid organs. SIV subverts the migration properties of dendritic cells to gain access to CD4+ T-cells in lymph nodes. Virus transmission to permissive T-cells occurs either in trans (without DCs infection, through viral capture and transmission), or in cis (following DCs productive infection, through the usual CD4-gp120 interaction), thereby inducing a robust infection. In trans infection, bound virions remain infectious over days and it is proposed that they are not degraded, but protected in non-lysosomal acidic organelles within the DCs close to the cell membrane thus contributing to the viral infectious potential during DCs' migration from the periphery to the lymphoid tissues. On arrival at lymphoid tissues, intact virions recycle back to DCs' cell surface allowing virus transmission to CD4+ T-cells. Virion capture also seems to lead to MHC-II-restricted viral antigen presentation, and probably to the activation of SIV-specific CD4+ cells. Its function is as follows. The transmembrane protein gp41 (TM) acts as a class I viral fusion protein. Under the current model, the protein has at least 3 conformational states: pre-fusion native state, pre-hairpin intermediate state, and post-fusion hairpin state. During fusion of viral and target intracellular membranes, the coiled coil regions (heptad repeats) assume a trimer-of-hairpins structure, positioning the fusion peptide in close proximity to the C-terminal region of the ectodomain. The formation of this structure appears to drive apposition and subsequent fusion of viral and target cell membranes. Complete fusion occurs in host cell endosomes. The virus undergoes clathrin-dependent internalization long before endosomal fusion, thus minimizing the surface exposure of conserved viral epitopes during fusion and reducing the efficacy of inhibitors targeting these epitopes. Membranes fusion leads to delivery of the nucleocapsid into the cytoplasm. The envelope glycoprotein gp160 precursor down-modulates cell surface CD4 antigen by interacting with it in the endoplasmic reticulum and blocking its transport to the cell surface. In terms of biological role, the gp120-gp41 heterodimer allows rapid transcytosis of the virus through CD4 negative cells such as simple epithelial monolayers of the intestinal, rectal and endocervical epithelial barriers. Both gp120 and gp41 specifically recognize glycosphingolipids galactosyl-ceramide (GalCer) or 3' sulfo-galactosyl-ceramide (GalS) present in the lipid rafts structures of epithelial cells. Binding to these alternative receptors allows the rapid transcytosis of the virus through the epithelial cells. This transcytotic vesicle-mediated transport of virions from the apical side to the basolateral side of the epithelial cells does not involve infection of the cells themselves. The polypeptide is Envelope glycoprotein gp160 (env) (Simian immunodeficiency virus (isolate PBj14/BCL-3) (SIV-sm)).